The primary structure comprises 434 residues: Alpha-enolase (434 aa).

Ser-2 carries the N-acetylserine modification. Mg(2+) is bound at residue Ser-40. The residue at position 44 (Tyr-44) is a Phosphotyrosine. N6-acetyllysine; alternate is present on Lys-60. Residue Lys-60 is modified to N6-succinyllysine; alternate. Lys-71 bears the N6-acetyllysine mark. Residue Lys-89 is modified to N6-acetyllysine; alternate. The residue at position 89 (Lys-89) is an N6-succinyllysine; alternate. Residues Lys-92 and Lys-126 each carry the N6-acetyllysine modification. His-158 and Glu-167 together coordinate substrate. Lys-193 and Lys-199 each carry N6-acetyllysine. Lys-202 carries the N6-acetyllysine; alternate modification. Residue Lys-202 forms a Glycyl lysine isopeptide (Lys-Gly) (interchain with G-Cter in SUMO2); alternate linkage. The active-site Proton donor is Glu-210. 2 positions are modified to N6-acetyllysine; alternate: Lys-228 and Lys-233. The residue at position 228 (Lys-228) is an N6-succinyllysine; alternate. The residue at position 228 (Lys-228) is an N6-(2-hydroxyisobutyryl)lysine; alternate. Lys-233 is subject to N6-malonyllysine; alternate. Residue Asp-245 coordinates Mg(2+). Ser-254 carries the post-translational modification Phosphoserine. Lys-256 is subject to N6-acetyllysine. Ser-263 carries the post-translational modification Phosphoserine. Position 281 is an N6-acetyllysine; alternate (Lys-281). Lys-281 bears the N6-(2-hydroxyisobutyryl)lysine; alternate mark. Tyr-287 carries the phosphotyrosine modification. Ser-291 bears the Phosphoserine mark. Residues Glu-293 and Asp-318 each contribute to the Mg(2+) site. Glu-293 and Asp-318 together coordinate substrate. 2 positions are modified to N6-acetyllysine: Lys-335 and Lys-343. Catalysis depends on Lys-343, which acts as the Proton acceptor. Substrate-binding positions include Ser-370–Ser-373 and Lys-394. A required for interaction with PLG region spans residues Ala-405–Lys-434. Residue Lys-406 is modified to N6-acetyllysine. N6-acetyllysine; alternate is present on Lys-420. Lys-420 bears the N6-succinyllysine; alternate mark. Lys-420 is subject to N6-malonyllysine; alternate.

This sequence belongs to the enolase family. Mammalian enolase is composed of 3 isozyme subunits, alpha, beta and gamma, which can form homodimers or heterodimers which are cell-type and development-specific. ENO1 interacts with PLG in the neuronal plasma membrane and promotes its activation. The C-terminal lysine is required for this binding. In vitro, interacts with several glycolytic enzymes including PKM, PGM, CKM and aldolase. Also binds troponin, in vitro. Interacts with ENO4 and PGAM2. Interacts with CMTM6. Mg(2+) is required as a cofactor. In terms of processing, ISGylated. Lysine 2-hydroxyisobutyrylation (Khib) by p300/EP300 activates the phosphopyruvate hydratase activity. Testis. Found in the principal piece of sperm tail (at protein level). The alpha/alpha homodimer is expressed in embryo and in most adult tissues. The alpha/beta heterodimer and the beta/beta homodimer are found in striated muscle, and the alpha/gamma heterodimer and the gamma/gamma homodimer in neurons. In striated muscle, expression of ENO1 appears to be independent of fiber type.

The protein resides in the cytoplasm. Its subcellular location is the cell membrane. The catalysed reaction is (2R)-2-phosphoglycerate = phosphoenolpyruvate + H2O. It functions in the pathway carbohydrate degradation; glycolysis; pyruvate from D-glyceraldehyde 3-phosphate: step 4/5. Functionally, glycolytic enzyme the catalyzes the conversion of 2-phosphoglycerate to phosphoenolpyruvate. In addition to glycolysis, involved in various processes such as growth control, hypoxia tolerance and allergic responses. May also function in the intravascular and pericellular fibrinolytic system due to its ability to serve as a receptor and activator of plasminogen on the cell surface of several cell-types such as leukocytes and neurons. Stimulates immunoglobulin production. The chain is Alpha-enolase (Eno1) from Mus musculus (Mouse).